Reading from the N-terminus, the 2799-residue chain is Peramine synthetase ppzA (2799 aa).

The tract at residues 270 to 666 (QERCRLQPNA…VGRKDTQVKI (397 aa)) is adenylation 1. A Carrier 1 domain is found at 799-875 (QPLTGMERLL…DLSRQSRYIE (77 aa)). S836 bears the O-(pantetheine 4'-phosphoryl)serine mark. Residues 914–1327 (DAYPCTPLQE…ITILTTEDLE (414 aa)) are condensation. Residues 1350–1743 (DKVQARPNAP…TLSFVRRKDT (394 aa)) are adenylation 2. Residues 1874-1970 (LEIGCGSGMM…EYLVKLIQDI (97 aa)) form a methylation (Met) domain region. One can recognise a Carrier 2 domain in the interval 2290-2368 (SPTTDMEKEL…RLLLDCCCDD (79 aa)). S2327 is subject to O-(pantetheine 4'-phosphoryl)serine. The tract at residues 2420–2737 (TVLLTGANGF…LADMLQDLED (318 aa)) is thiesterase (TE) domain.

The protein belongs to the NRP synthetase family. Requires pantetheine 4'-phosphate as cofactor.

It catalyses the reaction (S)-1-pyrroline-5-carboxylate + L-arginine + S-adenosyl-L-methionine + 2 ATP = peramine + 2 AMP + S-adenosyl-L-homocysteine + 2 diphosphate + H2O + 2 H(+). Its pathway is secondary metabolite biosynthesis. Nonribosomal peptide synthetase; part of the gene cluster that mediates the biosynthesis of pyrrolopyrazines, secondary metabolites showing insecticidal activity. The single multifunctional NRPS ppzA is responsible for the biosynthesis of peramine. The condensation domain of ppzA is proposed to catalyze formation of a peptide bond between 1-pyrroline-5-carboxylate and arginine. The methylation domain of ppzA would catalyze the N-methylation of the alpha-amino group of arginine. The reductase domain is proposed to be responsible for reduction of the thioester and the cyclization to form an iminium ion resulting in release from the peptide synthetase. Deprotonation of this intermediate and oxidation of the pyrroline ring would give rise to peramine. This final oxidation to give the pyrrole functionality may be spontaneous. In Epichloe species that produce only peramine, the peramine synthetase gene is not localized in a gene cluster, in contrast to Metarhizium species that contain additional pyrrolopyrazine biosynthesis genes. The 2-oxoglutarate-Fe(II) type oxidoreductase ppzC hydroxylates peramine to yield the newly identified compound 8-hydroxyperamine whereas ppzD converts L-proline into trans-4-hydroxy-L-proline, a precursor of peramine biosynthesis. This chain is Peramine synthetase ppzA, found in Metarhizium majus (strain ARSEF 297).